The sequence spans 214 residues: Large ribosomal subunit protein uL3 (214 aa).

Residues 134 to 161 are disordered; it reads THGNSLSHRAPGSIGQCQTPGRVMKGKK. N5-methylglutamine is present on glutamine 151.

Belongs to the universal ribosomal protein uL3 family. As to quaternary structure, part of the 50S ribosomal subunit. Forms a cluster with proteins L14 and L19. Post-translationally, methylated by PrmB.

In terms of biological role, one of the primary rRNA binding proteins, it binds directly near the 3'-end of the 23S rRNA, where it nucleates assembly of the 50S subunit. This chain is Large ribosomal subunit protein uL3, found in Teredinibacter turnerae (strain ATCC 39867 / T7901).